We begin with the raw amino-acid sequence, 388 residues long: Probable protein phosphatase 2C 43 (388 aa).

One can recognise a PPM-type phosphatase domain in the interval 53–352 (EFSFAVVQAN…DDITVVVVFI (300 aa)). The Mn(2+) site is built by aspartate 84, glycine 85, aspartate 284, and aspartate 343.

The protein belongs to the PP2C family. Mg(2+) serves as cofactor. The cofactor is Mn(2+).

It carries out the reaction O-phospho-L-seryl-[protein] + H2O = L-seryl-[protein] + phosphate. The catalysed reaction is O-phospho-L-threonyl-[protein] + H2O = L-threonyl-[protein] + phosphate. The sequence is that of Probable protein phosphatase 2C 43 from Oryza sativa subsp. japonica (Rice).